The primary structure comprises 349 residues: MLPSLQSLTKKVLAGQCLPTDQYYLLKCYDLWWYDSPITFDHNLGLIKSAGIKDGLDLNTALVKAVRENNYNLIKLFTEWGADINYGLVSVNTEHTRDLCRELGAKETLNEEEILRIFIDLKFYKTSSNIILCHEVFSNNPLLQKVNNLKMRIEIFWELRELIKKTDLLNNEFSLNTLLLKYWYAIAVRYNLKEAIQYFYQKYTHLNTWRLTCALCFNNVFDLHEAYEKDKIYMDLEEMMRVACIKDHNLSTIYYCYVLGANINQAMLASIQYYNIENMFFCMDLGADVFEENMPVGEGYELIRNILSLKIYSPSTAPLPKNTDPEIIDHVLKNYKSKNMMTFLSYDLR.

The ANK repeat unit spans residues D57–V89.

The protein belongs to the asfivirus MGF 360 family.

Functionally, plays a role in virus cell tropism, and may be required for efficient virus replication in macrophages. The sequence is that of Protein MGF 360-12L from African swine fever virus (isolate Tick/Malawi/Lil 20-1/1983) (ASFV).